The primary structure comprises 570 residues: Proline--tRNA ligase (570 aa).

It belongs to the class-II aminoacyl-tRNA synthetase family. ProS type 1 subfamily. Homodimer.

It localises to the cytoplasm. It carries out the reaction tRNA(Pro) + L-proline + ATP = L-prolyl-tRNA(Pro) + AMP + diphosphate. In terms of biological role, catalyzes the attachment of proline to tRNA(Pro) in a two-step reaction: proline is first activated by ATP to form Pro-AMP and then transferred to the acceptor end of tRNA(Pro). As ProRS can inadvertently accommodate and process non-cognate amino acids such as alanine and cysteine, to avoid such errors it has two additional distinct editing activities against alanine. One activity is designated as 'pretransfer' editing and involves the tRNA(Pro)-independent hydrolysis of activated Ala-AMP. The other activity is designated 'posttransfer' editing and involves deacylation of mischarged Ala-tRNA(Pro). The misacylated Cys-tRNA(Pro) is not edited by ProRS. In Syntrophomonas wolfei subsp. wolfei (strain DSM 2245B / Goettingen), this protein is Proline--tRNA ligase.